Consider the following 20-residue polypeptide: D-alpha-glycerophosphatase (20 aa).

Monomer. Mg(2+) serves as cofactor. It depends on Mn(2+) as a cofactor.

Its subcellular location is the cytoplasm. It functions in the pathway polyol metabolism; glycerol biosynthesis. In Bacillus licheniformis, this protein is D-alpha-glycerophosphatase.